Consider the following 149-residue polypeptide: uncharacterized protein (149 aa).

This is an uncharacterized protein from Archaeoglobus fulgidus (strain ATCC 49558 / DSM 4304 / JCM 9628 / NBRC 100126 / VC-16).